The following is a 526-amino-acid chain: Variant surface glycoprotein MITAT 1.4A (526 aa).

The signal sequence occupies residues 1-33 (MDCHTKETLGVTQWRRSTMLTLSLLYAITPADG). 2 disulfide bridges follow: Cys-47–Cys-173 and Cys-154–Cys-215. The tract at residues 157 to 193 (NEGGDGDGKDQLAPKGCRHGTEADFDAGAGPAESEVA) is disordered. Residue Asn-453 is glycosylated (N-linked (GlcNAc...) asparagine). Asp-503 carries GPI-anchor amidated aspartate lipidation. A propeptide spans 504–526 (SSILVTKKFALTVVSAAFVALLF) (removed in mature form).

It is found in the cell membrane. Functionally, VSG forms a coat on the surface of the parasite. The trypanosome evades the immune response of the host by expressing a series of antigenically distinct VSGs from an estimated 1000 VSG genes. The polypeptide is Variant surface glycoprotein MITAT 1.4A (Trypanosoma brucei brucei).